The sequence spans 634 residues: Leucine--tRNA ligase subunit alpha (634 aa).

Positions 43 to 51 match the 'HIGH' region motif; the sequence is PSGRIHMGH.

This sequence belongs to the class-I aminoacyl-tRNA synthetase family. As to quaternary structure, seems to consist of an alpha chain and a beta chain.

It is found in the cytoplasm. It carries out the reaction tRNA(Leu) + L-leucine + ATP = L-leucyl-tRNA(Leu) + AMP + diphosphate. This is Leucine--tRNA ligase subunit alpha (leuS) from Aquifex aeolicus (strain VF5).